The sequence spans 86 residues: Large ribosomal subunit protein bL27 (86 aa).

The span at Met1–Thr10 shows a compositional bias: gly residues. The disordered stretch occupies residues Met1–Leu21.

This sequence belongs to the bacterial ribosomal protein bL27 family.

The chain is Large ribosomal subunit protein bL27 from Cupriavidus pinatubonensis (strain JMP 134 / LMG 1197) (Cupriavidus necator (strain JMP 134)).